The primary structure comprises 335 residues: Phospholipid scramblase 1 (335 aa).

The proline-rich domain (PRD) stretch occupies residues M1–P101. Residues M1–W102 are disordered. Residues M1–K305 lie on the Cytoplasmic side of the membrane. Repeat copies occupy residues Q23–P29, Q30–P36, Q37–P43, Q44–P50, Q51–P57, and Q58–P64. The 7 X 7 AA tandem repeats of Q-G-P-Y-[AP]-G-P stretch occupies residues Q23–P71. Over residues Y26 to Q37 the composition is skewed to pro residues. Residues G59–P72 are compositionally biased toward pro residues. An SH3-binding 1 motif is present at residues P64–P72. The 7; approximate repeat unit spans residues Q65–P71. A Phosphotyrosine; by ABL modification is found at Y91. The SH3-binding 2 motif lies at P101 to P109. The residue at position 178 (T178) is a Phosphothreonine; by PKC/PRKCD. 4 S-palmitoyl cysteine lipidation sites follow: C201, C202, C205, and C206. Positions G274 to F283 match the Nuclear localization signal motif. Residues M306–F322 form a helical membrane-spanning segment. Residues E323–W335 are Extracellular-facing.

Belongs to the phospholipid scramblase family. Forms homooligomers in the presence of calcium. Interacts with ABL. Interacts with RELT, RELL1 and RELL2. Interacts with OXSR1 in the presence of RELT. Interacts with OCLN, TOP2A and TOP2B. Interacts with TRPC1, TRPC4 and TRPC5. Interacts with ILDR1. Ca(2+) serves as cofactor. The cofactor is Mg(2+). Requires Zn(2+) as cofactor. Phosphorylated on tyrosine residues. Phosphorylated by OXSR1 in the presence of RELT. Phosphorylation at Thr-178 by PKC/PKCD increases its phospholipid scramblase activity during both cell stimulation and apoptosis. In terms of processing, palmitoylation is required for its phospholipid scramblase activity. Palmitoylation regulates its localization to the cell membrane or the nucleus; trafficking to the cell membrane is dependent upon palmitoylation whereas in the absence of palmitoylation, localizes to the nucleus.

It is found in the cell membrane. The protein localises to the nucleus. The protein resides in the cytoplasm. Its subcellular location is the perinuclear region. It carries out the reaction a 1,2-diacyl-sn-glycero-3-phosphocholine(in) = a 1,2-diacyl-sn-glycero-3-phosphocholine(out). It catalyses the reaction a 1,2-diacyl-sn-glycero-3-phosphoethanolamine(in) = a 1,2-diacyl-sn-glycero-3-phosphoethanolamine(out). The catalysed reaction is a 1,2-diacyl-sn-glycero-3-phospho-L-serine(in) = a 1,2-diacyl-sn-glycero-3-phospho-L-serine(out). In terms of biological role, catalyzes calcium-induced ATP-independent rapid bidirectional and non-specific distribution of phospholipids (lipid scrambling or lipid flip-flop) between the inner and outer leaflet of the plasma membrane resulting in collapse of the phospholipid asymmetry which leads to phosphatidylserine externalization on the cell surface. Mediates calcium-dependent phosphatidylserine externalization and apoptosis in neurons via its association with TRPC5. Also exhibits magnesium-dependent nuclease activity against double-stranded DNA and RNA but not single-stranded DNA and can enhance DNA decatenation mediated by TOP2A. Negatively regulates FcR-mediated phagocytosis in differentiated macrophages. May contribute to cytokine-regulated cell proliferation and differentiation. This chain is Phospholipid scramblase 1 (Plscr1), found in Rattus norvegicus (Rat).